The primary structure comprises 328 residues: 5,10-methylenetetrahydromethanopterin reductase (328 aa).

Belongs to the mer family.

Its subcellular location is the cytoplasm. The catalysed reaction is 5-methyl-5,6,7,8-tetrahydromethanopterin + oxidized coenzyme F420-(gamma-L-Glu)(n) + H(+) = 5,10-methylenetetrahydromethanopterin + reduced coenzyme F420-(gamma-L-Glu)(n). The protein operates within one-carbon metabolism; methanogenesis from CO(2); methyl-coenzyme M from 5,10-methylene-5,6,7,8-tetrahydromethanopterin: step 1/2. Catalyzes the reversible reduction of methylene-H(4)MPT to methyl-H(4)MPT. The protein is 5,10-methylenetetrahydromethanopterin reductase of Methanosarcina acetivorans (strain ATCC 35395 / DSM 2834 / JCM 12185 / C2A).